A 283-amino-acid chain; its full sequence is Bifunctional protein FolD 2 (283 aa).

NADP(+)-binding positions include 165–167 (GRG), threonine 192, and valine 233.

It belongs to the tetrahydrofolate dehydrogenase/cyclohydrolase family. Homodimer.

It carries out the reaction (6R)-5,10-methylene-5,6,7,8-tetrahydrofolate + NADP(+) = (6R)-5,10-methenyltetrahydrofolate + NADPH. The catalysed reaction is (6R)-5,10-methenyltetrahydrofolate + H2O = (6R)-10-formyltetrahydrofolate + H(+). It functions in the pathway one-carbon metabolism; tetrahydrofolate interconversion. Catalyzes the oxidation of 5,10-methylenetetrahydrofolate to 5,10-methenyltetrahydrofolate and then the hydrolysis of 5,10-methenyltetrahydrofolate to 10-formyltetrahydrofolate. The sequence is that of Bifunctional protein FolD 2 from Nocardioides sp. (strain ATCC BAA-499 / JS614).